Consider the following 362-residue polypeptide: uncharacterized protein (362 aa).

The next 7 membrane-spanning stretches (helical) occupy residues 32-52, 75-95, 106-126, 148-168, 176-196, 287-307, and 329-349; these read GAGW…VGAV, FVDA…ADGV, VVML…DLSV, AAVG…GVGA, GVGT…VVVV, VFAL…PVAM, and VLVA…CGMF.

The protein belongs to the peptidase S58 family.

It localises to the cell membrane. In terms of biological role, aminopeptidase. This is an uncharacterized protein from Mycobacterium leprae (strain TN).